Reading from the N-terminus, the 344-residue chain is MALPRPTSPHARGSNRTPAIMRLVLGACVPGLLTLTWLYGPGTLLNLAWASLVALACEAAMLALRKRPPGVFLKDGSALVTALLLAVALPPYAPWWLTLVATFFALVFGKHLYGGLGQNPFNPAMLGYVVALVSFPLEMTRWPSPDSALGLPDSLREFLGLATRPDAWAHATALDVLKTDRSLTVDELFAGNPAFGHLGSAGSEWVNLAFLLGGLFLLWRRLFTWHAPLGMLAGLFAMSLLFWNGSGSDSHGSPLFHLFSGATMLGAFFIVTDPVSGATSNRGRLVFGLGVGVLTYVIRAWGGYPDGMAFAVLLMNLAAPTIDYYTRPRTYGHRKAERGFKAGD.

4 helical membrane-spanning segments follow: residues Leu23–Thr43, Leu44–Leu64, Ser77–Leu99, and Pro120–Thr140. At Thr172 the chain carries FMN phosphoryl threonine. 5 helical membrane passes run Leu198–Leu218, Leu222–Phe242, Gly252–Thr272, Leu285–Pro305, and Asp306–Thr326.

This sequence belongs to the NqrB/RnfD family. As to quaternary structure, the complex is composed of six subunits: RnfA, RnfB, RnfC, RnfD, RnfE and RnfG. Requires FMN as cofactor.

The protein localises to the cell inner membrane. Functionally, part of a membrane-bound complex that couples electron transfer with translocation of ions across the membrane. In Pseudomonas aeruginosa (strain LESB58), this protein is Ion-translocating oxidoreductase complex subunit D.